A 1044-amino-acid chain; its full sequence is Elongation factor 3A (1044 aa).

An N-acetylserine modification is found at S2. The HEAT 1 repeat unit spans residues Q5–I42. Residues I42, H44, and S83 each coordinate ADP. HEAT repeat units lie at residues P86–P123, A125–D162, L166–N203, D205–P241, A242–D279, and P285–V323. N6,N6,N6-trimethyllysine occurs at positions 187 and 196. Residue K350 forms a Glycyl lysine isopeptide (Lys-Gly) (interchain with G-Cter in ubiquitin) linkage. Residues T392, H396, and E397 each coordinate ADP. Residues D426–L641 enclose the ABC transporter 1 domain. Residue K636 forms a Glycyl lysine isopeptide (Lys-Gly) (interchain with G-Cter in ubiquitin) linkage. The residue at position 642 (S642) is a Phosphoserine. Residues V667–D993 enclose the ABC transporter 2 domain. An ADP-binding site is contributed by N703. K789 bears the N6,N6,N6-trimethyllysine mark. E922, N925, and H951 together coordinate ADP. At T972 the chain carries Phosphothreonine. The residue at position 974 (S974) is a Phosphoserine. A disordered region spans residues S974–F1044. Over residues G1007 to K1031 the composition is skewed to basic residues. A phosphoserine mark is found at S1039 and S1040.

The protein belongs to the ABC transporter superfamily. ABCF family. EF3 subfamily. Monomer. Interacts with elongation factor 1A (eEF1A). Interacts through its N-terminus with 18S rRNA. Associates with ribosomes; preferentially binds ribosomes in the post-translocational state (bearing a peptidyl-tRNA in the P-site) in the presence of ATP, suggesting that ATP hydrolysis is required for ribosome dissociation.

It localises to the cytoplasm. It is found in the cytosol. It carries out the reaction ATP + H2O = ADP + phosphate + H(+). Its pathway is protein biosynthesis; polypeptide chain elongation. With respect to regulation, inhibited by the translational inhibitors neomycin and alpha-sarcin, which suppress the ATPase activity. Ribosome-dependent ATPase that functions in cytoplasmic translation elongation. Required for the ATP-dependent release of deacylated tRNA from the ribosomal E-site during protein biosynthesis. Stimulates the eEF1A-dependent binding of aminoacyl-tRNA to the ribosomal A-site, which has reduced affinity for tRNA as long as the E-site is occupied. Assists translation termination by stimulating the release of nascent protein from the ribosome by release factors. In nutrient-replete conditions, occupies the space on the ribosome bound by GCN1 during amino acid starvation conditions, and therefore indirectly negatively regulates GCN2 kinase activity in replete conditions. The chain is Elongation factor 3A (YEF3) from Saccharomyces cerevisiae (strain ATCC 204508 / S288c) (Baker's yeast).